We begin with the raw amino-acid sequence, 121 residues long: UPF0091 protein PH1428 (121 aa).

The protein belongs to the UPF0091 family.

The polypeptide is UPF0091 protein PH1428 (Pyrococcus horikoshii (strain ATCC 700860 / DSM 12428 / JCM 9974 / NBRC 100139 / OT-3)).